We begin with the raw amino-acid sequence, 120 residues long: IPGIVKDEVKPQVHTWTFADGKKIIVLSEGRLLNLGNATGHPSFVMSNSFADQTLAQIELYTKPEQYPTDVYVLPKHLDEKVARLHLDALGVKLTTLRPEQAEYIGVEVEGPYKPDHYRY.

Asparagine 34 provides a ligand contact to NAD(+).

It belongs to the adenosylhomocysteinase family. The cofactor is NAD(+).

The protein resides in the cytoplasm. The catalysed reaction is S-adenosyl-L-homocysteine + H2O = L-homocysteine + adenosine. It participates in amino-acid biosynthesis; L-homocysteine biosynthesis; L-homocysteine from S-adenosyl-L-homocysteine: step 1/1. Its function is as follows. May play a key role in the regulation of the intracellular concentration of adenosylhomocysteine. This is Adenosylhomocysteinase (ahcY) from Streptomyces fradiae (Streptomyces roseoflavus).